We begin with the raw amino-acid sequence, 118 residues long: Holo-[acyl-carrier-protein] synthase (118 aa).

D8 and E57 together coordinate Mg(2+).

Belongs to the P-Pant transferase superfamily. AcpS family. Requires Mg(2+) as cofactor.

It is found in the cytoplasm. The catalysed reaction is apo-[ACP] + CoA = holo-[ACP] + adenosine 3',5'-bisphosphate + H(+). In terms of biological role, transfers the 4'-phosphopantetheine moiety from coenzyme A to a Ser of acyl-carrier-protein. The protein is Holo-[acyl-carrier-protein] synthase of Pediococcus pentosaceus (strain ATCC 25745 / CCUG 21536 / LMG 10740 / 183-1w).